A 99-amino-acid chain; its full sequence is Small ribosomal subunit protein bS18 (99 aa).

A disordered region spans residues 1-25 (MAESKGRPGSASQRPTGGDKAIAGQ).

Belongs to the bacterial ribosomal protein bS18 family. Part of the 30S ribosomal subunit. Forms a tight heterodimer with protein bS6.

In terms of biological role, binds as a heterodimer with protein bS6 to the central domain of the 16S rRNA, where it helps stabilize the platform of the 30S subunit. This is Small ribosomal subunit protein bS18 from Solibacter usitatus (strain Ellin6076).